The sequence spans 219 residues: UPF0502 protein Swoo_2055 (219 aa).

The tract at residues 167–195 is disordered; that stretch reads QVKGESVPISEHSRSQREAPSKRQDEMDE. Positions 177–191 are enriched in basic and acidic residues; sequence EHSRSQREAPSKRQD.

This sequence belongs to the UPF0502 family.

This is UPF0502 protein Swoo_2055 from Shewanella woodyi (strain ATCC 51908 / MS32).